The sequence spans 432 residues: Adenylosuccinate synthetase (432 aa).

GTP-binding positions include 12-18 (GDEGKGK) and 40-42 (GHT). Catalysis depends on Asp-13, which acts as the Proton acceptor. Positions 13 and 40 each coordinate Mg(2+). Residues 13–16 (DEGK), 38–41 (NAGH), Thr-132, Arg-146, Gln-226, Thr-241, and Arg-305 each bind IMP. The Proton donor role is filled by His-41. 301–307 (VVTGRKR) serves as a coordination point for substrate. GTP is bound by residues Arg-307, 333 to 335 (KLD), and 415 to 417 (STS).

It belongs to the adenylosuccinate synthetase family. As to quaternary structure, homodimer. Requires Mg(2+) as cofactor.

It is found in the cytoplasm. The enzyme catalyses IMP + L-aspartate + GTP = N(6)-(1,2-dicarboxyethyl)-AMP + GDP + phosphate + 2 H(+). The protein operates within purine metabolism; AMP biosynthesis via de novo pathway; AMP from IMP: step 1/2. Plays an important role in the de novo pathway of purine nucleotide biosynthesis. Catalyzes the first committed step in the biosynthesis of AMP from IMP. This chain is Adenylosuccinate synthetase, found in Rhizobium etli (strain CIAT 652).